The chain runs to 180 residues: Ribosome-recycling factor (180 aa).

The protein belongs to the RRF family.

It is found in the cytoplasm. Its function is as follows. Responsible for the release of ribosomes from messenger RNA at the termination of protein biosynthesis. May increase the efficiency of translation by recycling ribosomes from one round of translation to another. In Chlamydia felis (strain Fe/C-56) (Chlamydophila felis), this protein is Ribosome-recycling factor.